The following is a 130-amino-acid chain: Large ribosomal subunit protein bL12 (130 aa).

The protein belongs to the bacterial ribosomal protein bL12 family. Homodimer. Part of the ribosomal stalk of the 50S ribosomal subunit. Forms a multimeric L10(L12)X complex, where L10 forms an elongated spine to which 2 to 4 L12 dimers bind in a sequential fashion. Binds GTP-bound translation factors.

Its function is as follows. Forms part of the ribosomal stalk which helps the ribosome interact with GTP-bound translation factors. Is thus essential for accurate translation. This is Large ribosomal subunit protein bL12 from Synechococcus sp. (strain RCC307).